Consider the following 482-residue polypeptide: MSILVKNNIHWVGQRDWEVRDFHGTEYKTLRGSSYNSYLIREGKNVLIDTVDHKFSREFVQNLRSEIDLDAIDYIIINHAEEDHAGALTELMSYIPNTPIYCTTNAIDSINGHHHHPEWNFHTVKTGDSLDIGNGKQLIFVETPMLHWPDSMMTYMTGDAVLFSNDAFGQHYCDERLFNDEVDQTELFEQCQRYYANILTPFSRLVTPKITEILGFNLPVDMIATSHGVVWRENPTQIVELYLKWAADYQEDRITLFYDTMSNNTRMMADAIAQGINEVDPNVAVKIFNVARSDKNEILTNVFRSKGVLVGTSTMNNVMMPKIAGLVEEMTGLRFRNKRASAFGSHGWSGGAVDRLSTRLQDAGFEMSMSLKAKWRPDVDALEICRQHGREIARQWALAPLPEASVKPTQQQENCACAAAATADLGPCMQCSVCQWVYDPALGEPLQDVAPGTPWSDVPDNFLCPECSLGKDVFDVLATEAK.

The tract at residues 30–210 (LRGSSYNSYL…PFSRLVTPKI (181 aa)) is zinc metallo-hydrolase. Fe cation contacts are provided by H79, E81, D83, H147, D166, and H227. The region spanning 254 to 393 (ITLFYDTMSN…ICRQHGREIA (140 aa)) is the Flavodoxin-like domain. Residues 260-264 (TMSNN) and 342-369 (AFGS…EMSM) contribute to the FMN site. One can recognise a Rubredoxin-like domain in the interval 426–477 (GPCMQCSVCQWVYDPALGEPLQDVAPGTPWSDVPDNFLCPECSLGKDVFDVL). Residues C431, C434, C464, and C467 each contribute to the Fe cation site.

In the N-terminal section; belongs to the zinc metallo-hydrolase group 3 family. As to quaternary structure, homotetramer. The cofactor is Fe cation. Requires FMN as cofactor.

It localises to the cytoplasm. The protein operates within nitrogen metabolism; nitric oxide reduction. In terms of biological role, anaerobic nitric oxide reductase; uses NADH to detoxify nitric oxide (NO), protecting several 4Fe-4S NO-sensitive enzymes. Has at least 2 reductase partners, only one of which (NorW, flavorubredoxin reductase) has been identified. NO probably binds to the di-iron center; electrons enter from the NorW at rubredoxin and are transferred sequentially to the FMN center and the di-iron center. Also able to function as an aerobic oxygen reductase. The chain is Anaerobic nitric oxide reductase flavorubredoxin from Enterobacter sp. (strain 638).